Reading from the N-terminus, the 522-residue chain is Cytochrome P450 26C1 (522 aa).

Residues 9-29 (LSVLGAAGTALLCAGLLLSLA) form a helical membrane-spanning segment. Cys459 is a binding site for heme.

Belongs to the cytochrome P450 family. It depends on heme as a cofactor. In terms of tissue distribution, detected in most tissues at very low level.

It localises to the membrane. The catalysed reaction is an organic molecule + reduced [NADPH--hemoprotein reductase] + O2 = an alcohol + oxidized [NADPH--hemoprotein reductase] + H2O + H(+). It carries out the reaction all-trans-retinoate + reduced [NADPH--hemoprotein reductase] + O2 = all-trans-4-hydroxyretinoate + oxidized [NADPH--hemoprotein reductase] + H2O + H(+). It catalyses the reaction all-trans-4-hydroxyretinoate + reduced [NADPH--hemoprotein reductase] + O2 = all-trans-4-oxoretinoate + oxidized [NADPH--hemoprotein reductase] + 2 H2O + H(+). The enzyme catalyses 9-cis-retinoate + reduced [NADPH--hemoprotein reductase] + O2 = 9-cis-4-hydroxyretinoate + oxidized [NADPH--hemoprotein reductase] + H2O + H(+). The catalysed reaction is 9-cis-4-hydroxyretinoate + reduced [NADPH--hemoprotein reductase] + O2 = 9-cis-4-oxoretinoate + oxidized [NADPH--hemoprotein reductase] + 2 H2O + H(+). It carries out the reaction all-trans-4-hydroxy-13,14-dihydroretinoate + reduced [NADPH--hemoprotein reductase] + O2 = all-trans-4-oxo-13,14-dihydroretinoate + oxidized [NADPH--hemoprotein reductase] + 2 H2O + H(+). It catalyses the reaction all-trans-13,14-dihydroretinoate + reduced [NADPH--hemoprotein reductase] + O2 = all-trans-4-hydroxy-13,14-dihydroretinoate + oxidized [NADPH--hemoprotein reductase] + H2O + H(+). In terms of biological role, a cytochrome P450 monooxygenase involved in the metabolism of retinoates (RAs), the active metabolites of vitamin A, and critical signaling molecules in animals. RAs exist as at least four different isomers: all-trans-RA (atRA), 9-cis-RA, 13-cis-RA, and 9,13-dicis-RA, where atRA is considered to be the biologically active isomer, although 9-cis-RA and 13-cis-RA also have activity. Catalyzes the oxidation of atRA primarily at C-4. Oxidation of atRA limits its biological activity and initiates a degradative process leading to its eventual elimination, thereby contributes to the regulation of atRA homeostasis and signaling. Able to metabolize other RAs such as 9-cis with high efficiency. Can oxidize all-trans-13,14-dihydroretinoate (DRA) to metabolites which could include all-trans-4-oxo-DRA, all-trans-4-hydroxy-DRA, all-trans-5,8-epoxy-DRA, and all-trans-18-hydroxy-DRA. Shares sequence similarity with other CYP26 family members, but has higher affinity to 9-cis-RA and is much less sensitive to the inhibitory effects of ketoconazole. In cooperation with Cyp26a1, contributes to the CNS patterning and the development of regions of higher visual acuity. This chain is Cytochrome P450 26C1 (CYP26C1), found in Homo sapiens (Human).